The primary structure comprises 228 residues: CD302 antigen (228 aa).

The first 20 residues, 1–20 (MPHAALSSLVLLSLATAIVA), serve as a signal peptide directing secretion. The Extracellular segment spans residues 21-165 (DCPSSTWVQF…YDKKYLSDNH (145 aa)). In terms of domain architecture, C-type lectin spans 30-149 (FQGSCYAFLQ…CEISSVEGTL (120 aa)). A glycan (N-linked (GlcNAc...) asparagine) is linked at N107. The cysteines at positions 125 and 140 are disulfide-linked. Residues 166–186 (ILISTLVIASTVTLAVLGAII) traverse the membrane as a helical segment. The Cytoplasmic segment spans residues 187 to 228 (WFLYRRNARSGFTSFSPAPLSPYSDGCALVVAEEDEYAVQLD).

It localises to the membrane. It is found in the cell projection. Its subcellular location is the filopodium. The protein resides in the cytoplasm. The protein localises to the cell cortex. It localises to the microvillus. Its function is as follows. Potential multifunctional C-type lectin receptor that may play roles in endocytosis and phagocytosis as well as in cell adhesion and migration. The chain is CD302 antigen (Cd302) from Mus musculus (Mouse).